We begin with the raw amino-acid sequence, 597 residues long: Elongation factor 4 (597 aa).

Positions 2–184 constitute a tr-type G domain; it reads QHIRNFSIIA…AIVARVPSPE (183 aa). Residues 14–19 and 131–134 contribute to the GTP site; these read DHGKST and NKMD.

It belongs to the TRAFAC class translation factor GTPase superfamily. Classic translation factor GTPase family. LepA subfamily.

It localises to the cell inner membrane. The catalysed reaction is GTP + H2O = GDP + phosphate + H(+). Functionally, required for accurate and efficient protein synthesis under certain stress conditions. May act as a fidelity factor of the translation reaction, by catalyzing a one-codon backward translocation of tRNAs on improperly translocated ribosomes. Back-translocation proceeds from a post-translocation (POST) complex to a pre-translocation (PRE) complex, thus giving elongation factor G a second chance to translocate the tRNAs correctly. Binds to ribosomes in a GTP-dependent manner. The polypeptide is Elongation factor 4 (Bordetella avium (strain 197N)).